Reading from the N-terminus, the 473-residue chain is Spliceosome-associated protein CWC27 homolog (473 aa).

Position 2 is an N-acetylserine (serine 2). Positions 11–166 (TNGKVLLKTT…NSHKIRSCEV (156 aa)) constitute a PPIase cyclophilin-type domain. Residues 178–193 (EIKKPKKEKPEEEVKK) are compositionally biased toward basic and acidic residues. Disordered stretches follow at residues 178 to 197 (EIKK…LKPK), 203 to 383 (SLLS…TSRE), and 401 to 473 (IAET…KERR). Residues 206–230 (SFGEEAEEEEEEVNRVSQSMKGKSK) are a coiled coil. Over residues 231-241 (SSHDLLKDDPH) the composition is skewed to basic and acidic residues. Positions 252-254 (RGD) match the Cell attachment site motif. Over residues 256 to 266 (AEDSDDDGEYE) the composition is skewed to acidic residues. Basic and acidic residues-rich tracts occupy residues 267–348 (GAEH…KRSE) and 360–372 (EYRR…EALR). Positions 311 to 378 (VSRSEELRKE…EALRKQQAKT (68 aa)) form a coiled coil. A Phosphoserine modification is found at serine 347. The segment covering 405-419 (PENDISETEVEDDEG) has biased composition (acidic residues). Composition is skewed to basic and acidic residues over residues 426-438 (QFED…KDAS) and 458-473 (RREE…KERR).

Belongs to the cyclophilin-type PPIase family. As to quaternary structure, part of the activated spliceosome B/catalytic step 1 spliceosome, one of the forms of the spliceosome which has a well-formed active site but still cannot catalyze the branching reaction and is composed at least of 52 proteins, the U2, U5 and U6 snRNAs and the pre-mRNA. Recruited during early steps of activated spliceosome B maturation, it is probably one of the first proteins released from this complex as he matures to the spliceosome C complex. Component of the minor spliceosome, which splices U12-type introns.

Its subcellular location is the nucleus. In terms of biological role, as part of the spliceosome, plays a role in pre-mRNA splicing. Probable inactive PPIase with no peptidyl-prolyl cis-trans isomerase activity. As a component of the minor spliceosome, involved in the splicing of U12-type introns in pre-mRNAs. In Bos taurus (Bovine), this protein is Spliceosome-associated protein CWC27 homolog.